The primary structure comprises 371 residues: Alanine racemase (371 aa).

K39 acts as the Proton acceptor; specific for D-alanine in catalysis. K39 carries the post-translational modification N6-(pyridoxal phosphate)lysine. Substrate is bound at residue R137. Y266 acts as the Proton acceptor; specific for L-alanine in catalysis. Position 314 (M314) interacts with substrate.

This sequence belongs to the alanine racemase family. Requires pyridoxal 5'-phosphate as cofactor.

It carries out the reaction L-alanine = D-alanine. Its pathway is amino-acid biosynthesis; D-alanine biosynthesis; D-alanine from L-alanine: step 1/1. Catalyzes the interconversion of L-alanine and D-alanine. May also act on other amino acids. The chain is Alanine racemase (alr) from Desulfovibrio desulfuricans (strain ATCC 27774 / DSM 6949 / MB).